A 122-amino-acid polypeptide reads, in one-letter code: Putative iron-sulfur cluster insertion protein ErpA (122 aa).

Iron-sulfur cluster contacts are provided by cysteine 50, cysteine 114, and cysteine 116.

Belongs to the HesB/IscA family. Homodimer. It depends on iron-sulfur cluster as a cofactor.

In terms of biological role, required for insertion of 4Fe-4S clusters. The protein is Putative iron-sulfur cluster insertion protein ErpA of Cupriavidus necator (strain ATCC 17699 / DSM 428 / KCTC 22496 / NCIMB 10442 / H16 / Stanier 337) (Ralstonia eutropha).